The chain runs to 155 residues: 3-hydroxyacyl-[acyl-carrier-protein] dehydratase FabZ (155 aa).

Histidine 58 is a catalytic residue.

Belongs to the thioester dehydratase family. FabZ subfamily.

The protein resides in the cytoplasm. The enzyme catalyses a (3R)-hydroxyacyl-[ACP] = a (2E)-enoyl-[ACP] + H2O. Functionally, involved in unsaturated fatty acids biosynthesis. Catalyzes the dehydration of short chain beta-hydroxyacyl-ACPs and long chain saturated and unsaturated beta-hydroxyacyl-ACPs. The protein is 3-hydroxyacyl-[acyl-carrier-protein] dehydratase FabZ of Rhizobium johnstonii (strain DSM 114642 / LMG 32736 / 3841) (Rhizobium leguminosarum bv. viciae).